The chain runs to 179 residues: TPD1 protein homolog 1 (179 aa).

The signal sequence occupies residues 1–30; the sequence is MRMEHIYKFQHWLFFIGLGVLLSLSLSVKA.

This is TPD1 protein homolog 1 from Arabidopsis thaliana (Mouse-ear cress).